A 545-amino-acid chain; its full sequence is Thermosome subunit alpha (545 aa).

The interval 522–545 (KKSTPPSGQGGQGQGMPGGGMPEY) is disordered. Positions 529-545 (GQGGQGQGMPGGGMPEY) are enriched in gly residues.

Belongs to the TCP-1 chaperonin family. Forms a Heterooligomeric complex of two stacked eight-membered rings. The N-terminus is blocked.

Functionally, molecular chaperone; binds unfolded polypeptides in vitro, and has a weak ATPase activity. The protein is Thermosome subunit alpha (thsA) of Thermoplasma acidophilum (strain ATCC 25905 / DSM 1728 / JCM 9062 / NBRC 15155 / AMRC-C165).